The sequence spans 192 residues: Putative metal-sulfur cluster biosynthesis proteins YuaD (192 aa).

Positions 15–179 (ADTKSFVTKQ…VYTGDEIEVH (165 aa)) constitute an MOSC domain.

In Bacillus subtilis (strain 168), this protein is Putative metal-sulfur cluster biosynthesis proteins YuaD (yuaD).